The sequence spans 358 residues: MIQNVTDDKIQWKCLESKIESQRIHYGRFAIAPLKKGQANTLGITLRRTLLSDLDGICITSVKIDNIKHEYCTLTGVRESIQDILLNLKEIVFKGVCDKTQKGFIFVKGPKKITASDIQIEPCIEILDSNQIIAHLTEPIDFKVELTIEKSMGFRLQNATQISKDSFSIDAIFMPIRNVNYSIHPVEKAGDWKSELLILEIWTNGSITPKEAFHQASEKIMNIFLSLSNSSDNQIQEKSTKNFEEKEEFIFQNIDGFKQDKETKVQESLGWKKISINQLELSARAYNCLKNEKISTLFDLLNYSQEDLLKIKNFGKRSFEQVVNALEKHFDMKLSKDSSKKFYEQLKNLELINNKDIS.

Positions 1–231 are alpha N-terminal domain (alpha-NTD); that stretch reads MIQNVTDDKI…NIFLSLSNSS (231 aa). Residues 266-358 are alpha C-terminal domain (alpha-CTD); it reads QESLGWKKIS…LELINNKDIS (93 aa).

Belongs to the RNA polymerase alpha chain family. As to quaternary structure, in plastids the minimal PEP RNA polymerase catalytic core is composed of four subunits: alpha, beta, beta', and beta''. When a (nuclear-encoded) sigma factor is associated with the core the holoenzyme is formed, which can initiate transcription.

It localises to the plastid. Its subcellular location is the chloroplast. It carries out the reaction RNA(n) + a ribonucleoside 5'-triphosphate = RNA(n+1) + diphosphate. DNA-dependent RNA polymerase catalyzes the transcription of DNA into RNA using the four ribonucleoside triphosphates as substrates. In Chara vulgaris (Common stonewort), this protein is DNA-directed RNA polymerase subunit alpha.